The chain runs to 578 residues: MTAAALAEIAAFFGLLTAAAVPLGAYAARVLSTAPPHGRGPVARLERGLYRLAGVDPAEQMGWRRYAAAALTFNAAGLLAVFALERLQAALPGNPAGLPAVSPLVAWNTAVSFATNTNWQAYGGESTMSHLTQMGALTVQNFLSAATGISVLAALVRALAGPAGSGLGSFWVDLTRVTLRLLLPLAAALALLLAWQGVPQTSSAAARWPTLSATAASPGAEQVVALGPVASQVAVKQLGTNGGGYFNANSAHPYENPTPLSNLLEALSILLVPAALCFAFGALVKDRRQGWTVYSAMLAILVPLTVATVSAEQRGNPALAALGVDASPSALQPGGNMEGKEARLGPVDSAIWAAATTAASNGSVNAAHDSFTALGGLWPLWLMQLGEVVFGGVGSGLYGMLLFAILAVFLAGLMVGRTPEYLGKKVEAYEVKMASLAILAPSATVLLGTAAACLLPAGYGAVGNPGPHGFTELLYALSSTANNNGSAFGGLAASTPFWTLLTGVAMLVGRYWVMLPVLAIAGAFARKRPVPAGPGTLPTHGPLFAGLLVATVLLVGALTFLPALALGPVIEHLQAVPR.

The next 11 membrane-spanning stretches (helical) occupy residues 3–23 (AAAL…AVPL), 67–87 (AAAA…LERL), 95–115 (PAGL…SFAT), 136–156 (ALTV…AALV), 181–201 (LLLP…VPQT), 264–284 (LEAL…GALV), 291–311 (WTVY…TVSA), 396–416 (GLYG…LMVG), 436–456 (LAIL…CLLP), 504–524 (VAML…AGAF), and 543–563 (LFAG…FLPA).

It belongs to the KdpA family. In terms of assembly, the system is composed of three essential subunits: KdpA, KdpB and KdpC.

The protein localises to the cell inner membrane. Part of the high-affinity ATP-driven potassium transport (or Kdp) system, which catalyzes the hydrolysis of ATP coupled with the electrogenic transport of potassium into the cytoplasm. This subunit binds the periplasmic potassium ions and delivers the ions to the membrane domain of KdpB through an intramembrane tunnel. The polypeptide is Potassium-transporting ATPase potassium-binding subunit (Anaeromyxobacter dehalogenans (strain 2CP-C)).